The chain runs to 922 residues: Cell surface glycoprotein 2 (922 aa).

Residues 1-23 (MTGNSDKVRSLFLTALMVFSVFA) form the signal peptide. N37, N56, N110, N220, N251, N262, and N292 each carry an N-linked (GlcNAc...) asparagine glycan. N307 carries N-linked (GalNAc...) asparagine glycosylation. Residues N319, N344, N396, N437, N490, N523, N557, N574, N587, N616, N700, N717, N809, N838, and N847 are each glycosylated (N-linked (GlcNAc...) asparagine). The interval 816–899 (PHQDTNGNEE…GTETTEAEGP (84 aa)) is disordered. The segment covering 835–850 (YTQNGSAVTDSANVTV) has biased composition (polar residues). The span at 853–887 (EEPEDTPEDTPEDTPEDTPEDTPEDTPADTPEDTP) shows a compositional bias: acidic residues. The span at 888-899 (DTGTETTEAEGP) shows a compositional bias: low complexity. A helical transmembrane segment spans residues 898–918 (GPGFTAAIALIALVAAALLAV). Positions 899–901 (PGF) match the PGF sorting signal motif.

The protein belongs to the halobacterial S-layer protein family. In terms of processing, N-glycosylated on Asn-307; this N-linked glycan is a branched trisaccharide containing 2-amino-6-sulfo-2,6-dideoxy-glucose (sulfoquinovosamine). Post-translationally, O-glycosylated on Thr residues within the DTPE repeats in the C-terminal region; glycans consist of Glc-Gal disaccharides. Cleaved by the archaeosortase ArtA at the C-terminus, with removal of a short hydrophobic segment. In terms of processing, lipidation.

It localises to the secreted. The protein resides in the cell wall. The protein localises to the S-layer. Its subcellular location is the cell membrane. Its function is as follows. S-layer protein. The S-layer is a paracrystalline mono-layered assembly of proteins which coat the surface of the cell. In H.hispanica, the S-layer contains two different glycoproteins, Slg1 and Slg2, which share highly similar amino acid sequences. This is Cell surface glycoprotein 2 from Haloarcula hispanica (strain ATCC 33960 / DSM 4426 / JCM 8911 / NBRC 102182 / NCIMB 2187 / VKM B-1755).